The following is a 218-amino-acid chain: MSLRSVLVAALAALAVATPVPENSLQERQLMSSNDVEDGVCRDVTFIFARGSTEQGNMGFVVGPEVCTSLKADLGSGKVACQGVGGAYTASLAPNFLSANTDPQSIQAATDLFEKAVANCPNTQIVAGGYSQGSAVMDNSIQALPADIQEKVKGVVLFGFTRNLQDNGQIPNYPKEDVKVYCALGDLVCSGTLIITPAHMTYGVNAGDAAQFLASKVQ.

A signal peptide spans 1–17; the sequence is MSLRSVLVAALAALAVA. Disulfide bonds link Cys-41-Cys-120 and Cys-67-Cys-81. The Nucleophile role is filled by Ser-131. A disulfide bond links Cys-182 and Cys-189. Asp-186 is an active-site residue. Residue His-199 is the Proton donor/acceptor of the active site.

It belongs to the cutinase family.

The protein localises to the secreted. The enzyme catalyses cutin + H2O = cutin monomers.. Functionally, catalyzes the hydrolysis of complex carboxylic polyesters found in the cell wall of plants. Degrades cutin, a macromolecule that forms the structure of the plant cuticle. In Aspergillus terreus (strain NIH 2624 / FGSC A1156), this protein is Probable cutinase 3.